The sequence spans 111 residues: Carboxysome shell protein CcmK1 (111 aa).

Positions 4–90 (AVGMIETLGF…PHENLEYVLP (87 aa)) constitute a BMC domain.

Belongs to the bacterial microcompartments protein family. CcmK subfamily. In terms of assembly, homohexamer. Interacts with full-length CcmM. Forms mixed heterohexamers of all possible stoichiometries with CcmK2, which might form dodecamers. Only very weak interactions with CcmK3 and CcmK4 were seen. Interacts with CcmN and CcmO in the carboxysome.

The protein localises to the carboxysome. One of the shell proteins of the carboxysome, a polyhedral inclusion where RuBisCO (ribulose bisphosphate carboxylase, rbcL-rbcS) is sequestered. Assembles into hexamers which make sheets that form the facets of the polyhedral carboxysome. The hexamer central pore probably regulates metabolite flux. In terms of biological role, probably the major shell protein of the carboxysome, a polyhedral inclusion where RuBisCO (ribulose bisphosphate carboxylase, rbcL-rbcS) is sequestered. The central pore probably regulates metabolite flux. Hexamers make sheets that form the facets of the carboxysome. In Synechocystis sp. (strain ATCC 27184 / PCC 6803 / Kazusa), this protein is Carboxysome shell protein CcmK1.